The sequence spans 949 residues: Protein translocase subunit SecA (949 aa).

Residues Q87, 105–109, and D524 contribute to the ATP site; that span reads GEGKT. Disordered regions lie at residues 852–876 and 896–939; these read PPPG…SSGG and LEFS…GSGK. The Zn(2+) site is built by C933, C935, C944, and H945.

Belongs to the SecA family. As to quaternary structure, monomer and homodimer. Part of the essential Sec protein translocation apparatus which comprises SecA, SecYEG and auxiliary proteins SecDF-YajC and YidC. It depends on Zn(2+) as a cofactor.

Its subcellular location is the cell inner membrane. The protein resides in the cytoplasm. It catalyses the reaction ATP + H2O + cellular proteinSide 1 = ADP + phosphate + cellular proteinSide 2.. Part of the Sec protein translocase complex. Interacts with the SecYEG preprotein conducting channel. Has a central role in coupling the hydrolysis of ATP to the transfer of proteins into and across the cell membrane, serving both as a receptor for the preprotein-SecB complex and as an ATP-driven molecular motor driving the stepwise translocation of polypeptide chains across the membrane. This chain is Protein translocase subunit SecA, found in Methylocella silvestris (strain DSM 15510 / CIP 108128 / LMG 27833 / NCIMB 13906 / BL2).